A 478-amino-acid polypeptide reads, in one-letter code: Dihydrolipoyl dehydrogenase (478 aa).

FAD is bound by residues 34-49, Lys58, and Gly122; that span reads EKYIGKEGKVALGGTC. A disulfide bond links Cys49 and Cys54. Residues 188-192, Glu211, Val245, and 276-279 contribute to the NAD(+) site; these read GAGVI and AVGR. FAD contacts are provided by Asp319 and Ala327. The Proton acceptor role is filled by His451.

Belongs to the class-I pyridine nucleotide-disulfide oxidoreductase family. As to quaternary structure, homodimer. Requires FAD as cofactor.

It is found in the cytoplasm. It catalyses the reaction N(6)-[(R)-dihydrolipoyl]-L-lysyl-[protein] + NAD(+) = N(6)-[(R)-lipoyl]-L-lysyl-[protein] + NADH + H(+). The branched-chain alpha-keto dehydrogenase complex catalyzes the overall conversion of alpha-keto acids to acyl-CoA and CO(2). It contains multiple copies of 3 enzymatic components: branched-chain alpha-keto acid decarboxylase (E1), lipoamide acyltransferase (E2) and lipoamide dehydrogenase (E3). The sequence is that of Dihydrolipoyl dehydrogenase (lpd) from Pseudomonas fluorescens.